The chain runs to 352 residues: AP2/ERF and B3 domain-containing transcription factor At1g51120 (352 aa).

The disordered stretch occupies residues 1–20 (MDEMSNVAKTTTETSGLTDS). Polar residues predominate over residues 7–20 (VAKTTTETSGLTDS). Positions 46-103 (KFKGVVQQQNGHWGAQIYADHRRIWLGTFKSAHEAAAAYDSASIKLRSFDANSHRNFP) form a DNA-binding region, AP2/ERF. The segment at residues 178–297 (FQKELTPSDV…KTFLMIDVHH (120 aa)) is a DNA-binding region (TF-B3).

Belongs to the AP2/ERF transcription factor family. RAV subfamily.

Its subcellular location is the nucleus. Probably acts as a transcriptional activator. Binds to the GCC-box pathogenesis-related promoter element. May be involved in the regulation of gene expression by stress factors and by components of stress signal transduction pathways. In Arabidopsis thaliana (Mouse-ear cress), this protein is AP2/ERF and B3 domain-containing transcription factor At1g51120.